The chain runs to 243 residues: Venom peptide isomerase heavy chain (243 aa).

Positions 1–243 constitute a Peptidase S1 domain; sequence IVGGKTAKFG…YTNWMSKNMV (243 aa). Residues Cys31 and Cys47 are joined by a disulfide bond. Active-site charge relay system residues include His46 and Asp96. Residue Asn127 is glycosylated (N-linked (GlcNAc...) asparagine). Intrachain disulfides connect Cys159-Cys181 and Cys190-Cys219. The active-site Charge relay system is the Ser194.

The protein belongs to the peptidase S1 family. As to quaternary structure, heterodimer with venom peptide isomerase light chain; disulfide-linked. In terms of processing, N-linked glycan at Asn-127 consists of Man3-GlcNAc2-Fuc. In terms of tissue distribution, expressed by the venom gland.

Its subcellular location is the secreted. Peptide isomerase that inverts the chirality at the Ser-81 of omega-Aga IVB. Acts cofactor-independently. This chain is Venom peptide isomerase heavy chain, found in Agelenopsis aperta (North American funnel-web spider).